We begin with the raw amino-acid sequence, 3013 residues long: Protein furry homolog-like (3013 aa).

Ser-2 carries the post-translational modification N-acetylserine. Positions Asp-90–Gln-109 are disordered. Phosphoserine is present on Ser-844. Disordered stretches follow at residues Ser-878–Thr-897 and Val-1476–Lys-1498. The segment covering Val-1476–Thr-1486 has biased composition (low complexity). Phosphoserine is present on residues Ser-1914, Ser-1935, Ser-1941, Ser-1945, and Ser-1957. Thr-1959 is modified (phosphothreonine). Phosphoserine is present on residues Ser-1978, Ser-2272, and Ser-2454. The interval Asp-2459–Glu-2492 is disordered. Positions Pro-2464–Gln-2483 are enriched in polar residues. Ser-2499 carries the post-translational modification Phosphoserine. 2 disordered regions span residues Leu-2508–Ser-2567 and Glu-2636–Thr-2660. Composition is skewed to polar residues over residues Ser-2528–Glu-2539 and Asp-2555–Ser-2567.

It belongs to the furry protein family. In terms of tissue distribution, widely expressed with higher expression in colon, placenta, brain and cells of lymphoid origin.

Functionally, plays a key role in maintaining the integrity of polarized cell extensions during morphogenesis, regulates the actin cytoskeleton and plays a key role in patterning sensory neuron dendritic fields by promoting avoidance between homologous dendrites as well as by limiting dendritic branching. May function as a transcriptional activator. In Homo sapiens (Human), this protein is Protein furry homolog-like (FRYL).